Here is a 287-residue protein sequence, read N- to C-terminus: MAASLWMGDLEPYMDENFISRAFATMGETVMSVKIIRNRLTGIPAGYCFVEFADLATAEKCLHKINGKPLPGATPAKRFKLNYATYGKQPDNSPEYSLFVGDLTPDVDDGMLYEFFVKVYPSCRGGKVVLDQTGVSKGYGFVKFTDELEQKRALTECQGAVGLGCKPVRLSVAIPKASRVKPVEYSQMYSYSYNQYYQQYQNYYAQWGYDQNTGSYSYSYPQYGYTQSTMQTYEEVGDDALEDPAPQLDVTEANKEFMEQSEELYDALMDCHWQPLDTVSSEIPAMM.

RRM domains follow at residues 3-86 (ASLW…YATY) and 96-175 (YSLF…VAIP).

The protein belongs to the RRM TRSPAP family. Component of the tRNA(Sec) complex composed at least of EEFSEC, SECISBP2, SEPHS1, SEPSECS, TRNAU1AP and tRNA(Sec). Associates with mRNP and/or polysomes. Found in a complex with tRNA(Sec). Interacts with SEPSECS. Ubiquitous.

Its subcellular location is the nucleus. It is found in the cytoplasm. Involved in the early steps of selenocysteine biosynthesis and tRNA(Sec) charging to the later steps resulting in the cotranslational incorporation of selenocysteine into selenoproteins. Stabilizes the SECISBP2, EEFSEC and tRNA(Sec) complex. May be involved in the methylation of tRNA(Sec). Enhances efficiency of selenoproteins synthesis. This is tRNA selenocysteine 1-associated protein 1 (Trnau1ap) from Rattus norvegicus (Rat).